A 382-amino-acid chain; its full sequence is Fimbrial usher domain-containing protein YdeT (382 aa).

The chain is Fimbrial usher domain-containing protein YdeT (ydeT) from Escherichia coli (strain K12).